A 70-amino-acid polypeptide reads, in one-letter code: Large ribosomal subunit protein uL29 (70 aa).

The protein belongs to the universal ribosomal protein uL29 family.

The chain is Large ribosomal subunit protein uL29 from Clostridium botulinum (strain Alaska E43 / Type E3).